The primary structure comprises 914 residues: Chitin synthase B (914 aa).

2 disordered regions span residues 1 to 67 (MAYQ…TSGY) and 112 to 140 (YARS…GGGL). Positions 130–140 (GGAGSGGGGGL) are enriched in gly residues. 7 helical membrane-spanning segments follow: residues 543 to 562 (WLNG…GRMY), 586 to 606 (ILTW…MDLV), 627 to 647 (IVNT…FILA), 662 to 682 (SFVV…YLVV), 712 to 732 (AGII…ASFM), 843 to 863 (LVTF…SDGV), and 882 to 902 (ALLW…CWFL).

The protein belongs to the chitin synthase family. Class III subfamily.

The protein resides in the cell membrane. It catalyses the reaction [(1-&gt;4)-N-acetyl-beta-D-glucosaminyl](n) + UDP-N-acetyl-alpha-D-glucosamine = [(1-&gt;4)-N-acetyl-beta-D-glucosaminyl](n+1) + UDP + H(+). Functionally, polymerizes chitin, a structural polymer of the cell wall and septum, by transferring the sugar moiety of UDP-GlcNAc to the non-reducing end of the growing chitin polymer. Plays an important role in septal growth or maintenance. Mediates colony spore formation. In Aspergillus niger (strain ATCC MYA-4892 / CBS 513.88 / FGSC A1513), this protein is Chitin synthase B.